The chain runs to 198 residues: ATP-dependent Clp protease proteolytic subunit 2 (198 aa).

Residue S101 is the Nucleophile of the active site. H126 is an active-site residue.

The protein belongs to the peptidase S14 family. Fourteen ClpP subunits assemble into 2 heptameric rings which stack back to back to give a disk-like structure with a central cavity, resembling the structure of eukaryotic proteasomes.

It is found in the cytoplasm. The catalysed reaction is Hydrolysis of proteins to small peptides in the presence of ATP and magnesium. alpha-casein is the usual test substrate. In the absence of ATP, only oligopeptides shorter than five residues are hydrolyzed (such as succinyl-Leu-Tyr-|-NHMec, and Leu-Tyr-Leu-|-Tyr-Trp, in which cleavage of the -Tyr-|-Leu- and -Tyr-|-Trp bonds also occurs).. Functionally, cleaves peptides in various proteins in a process that requires ATP hydrolysis. Has a chymotrypsin-like activity. Plays a major role in the degradation of misfolded proteins. This chain is ATP-dependent Clp protease proteolytic subunit 2, found in Thermosynechococcus vestitus (strain NIES-2133 / IAM M-273 / BP-1).